Here is a 354-residue protein sequence, read N- to C-terminus: S-adenosylmethionine:tRNA ribosyltransferase-isomerase (354 aa).

It belongs to the QueA family. As to quaternary structure, monomer.

The protein resides in the cytoplasm. The enzyme catalyses 7-aminomethyl-7-carbaguanosine(34) in tRNA + S-adenosyl-L-methionine = epoxyqueuosine(34) in tRNA + adenine + L-methionine + 2 H(+). The protein operates within tRNA modification; tRNA-queuosine biosynthesis. Functionally, transfers and isomerizes the ribose moiety from AdoMet to the 7-aminomethyl group of 7-deazaguanine (preQ1-tRNA) to give epoxyqueuosine (oQ-tRNA). This Pseudomonas syringae pv. syringae (strain B728a) protein is S-adenosylmethionine:tRNA ribosyltransferase-isomerase.